Here is a 182-residue protein sequence, read N- to C-terminus: Large ribosomal subunit protein uL6 (182 aa).

This sequence belongs to the universal ribosomal protein uL6 family. As to quaternary structure, part of the 50S ribosomal subunit.

Its function is as follows. This protein binds to the 23S rRNA, and is important in its secondary structure. It is located near the subunit interface in the base of the L7/L12 stalk, and near the tRNA binding site of the peptidyltransferase center. The protein is Large ribosomal subunit protein uL6 of Aeropyrum pernix (strain ATCC 700893 / DSM 11879 / JCM 9820 / NBRC 100138 / K1).